Reading from the N-terminus, the 516-residue chain is Ribose import ATP-binding protein RbsA (516 aa).

ABC transporter domains are found at residues 14-250 (LRLT…VGRA) and 261-504 (AKGA…AGIG). 46-53 (GENGAGKS) is a binding site for ATP.

Belongs to the ABC transporter superfamily. Ribose importer (TC 3.A.1.2.1) family. In terms of assembly, the complex is composed of an ATP-binding protein (RbsA), two transmembrane proteins (RbsC) and a solute-binding protein (RbsB).

It is found in the cell inner membrane. It catalyses the reaction D-ribose(out) + ATP + H2O = D-ribose(in) + ADP + phosphate + H(+). Functionally, part of the ABC transporter complex RbsABC involved in ribose import. Responsible for energy coupling to the transport system. The sequence is that of Ribose import ATP-binding protein RbsA from Jannaschia sp. (strain CCS1).